We begin with the raw amino-acid sequence, 750 residues long: MGKSESQMDITDINTPKPKKKQRWTPLEISLSVLVLLLTIIAVTMIALYATYDDGICKSSDCIKSAARLIQNMDATAEPCTDFFKYACGGWLKRNVIPETSSRYGNFDILRDELEVVLKDVLQEPKTEDIVAVQKAKTLYRSCINESAIDSRGGEPLLKLLPDVYGWPVATENWEQKYGASWTAEKAIAQLNSKYGKKVLINLFVGTDDKNSVNHVIHIDQPRLGLPSRDYYECTGIYKEACTAYVDFMISVARLIRQEERLPIDENQLALEMNKVMELEKEIANATAKPEDRNDPMLLYKKMTLAQIQNNFSLEINGKPFSWLNFTNEIMSTVNISITNEEDVVVYAPEYLTKLKPILTKYSARDLQNLMSWRFIMDLVSSLSRTYKESRNAFRKALYGTTSETATWRRCANYVNGNMENAVGRLYVEAAFAGESKHVVEDLIAQIREVFIQTLDDLTWMDAETKKRAEEKALAIKERIGYPDDIVSNDNKLNNEYLELNYKEDEYFENIIQNLKFSQSKQLKKLREKVDKDEWISGAAVVNAFYSSGRNQIVFPAGILQPPFFSAQQSNSLNYGGIGMVIGHEITHGFDDNGRNFNKDGDLVDWWTQQSASNFKEQSQCMVYQYGNFSWDLAGGQHLNGINTLGENIADNGGLGQAYRAYQNYIKKNGEEKLLPGLDLNHKQLFFLNFAQVWCGTYRPEYAVNSIKTDVHSPGNFRIIGTLQNSAEFSEAFHCRKNSYMNPEKKCRVW.

Residues 1–14 (MGKSESQMDITDIN) are compositionally biased toward polar residues. Residues 1 to 20 (MGKSESQMDITDINTPKPKK) form a disordered region. Gly-2 carries N-myristoyl glycine lipidation. The Cytoplasmic segment spans residues 2–28 (GKSESQMDITDINTPKPKKKQRWTPLE). Ser-4 and Ser-6 each carry phosphoserine. The Stop-transfer sequence signature appears at 16–23 (PKPKKKQR). Residues 29–51 (ISLSVLVLLLTIIAVTMIALYAT) form a helical; Signal-anchor for type II membrane protein membrane-spanning segment. The Extracellular portion of the chain corresponds to 52–750 (YDDGICKSSD…MNPEKKCRVW (699 aa)). Residues 56–750 (ICKSSDCIKS…MNPEKKCRVW (695 aa)) form the Peptidase M13 domain. 6 cysteine pairs are disulfide-bonded: Cys-57-Cys-62, Cys-80-Cys-735, Cys-88-Cys-695, Cys-143-Cys-411, Cys-234-Cys-242, and Cys-621-Cys-747. Arg-103 contributes to the a peptide binding site. Asn-145 is a glycosylation site (N-linked (GlcNAc...) asparagine). Asn-285, Asn-311, Asn-325, and Asn-335 each carry an N-linked (GlcNAc...) asparagine glycan. His-584 is a binding site for Zn(2+). The active site involves Glu-585. His-588 serves as a coordination point for Zn(2+). Asn-628 carries N-linked (GlcNAc...) asparagine glycosylation. Position 647 (Glu-647) interacts with Zn(2+). The active-site Proton donor is Asp-651.

The protein belongs to the peptidase M13 family. It depends on Zn(2+) as a cofactor. In terms of processing, myristoylation is a determinant of membrane targeting. Glycosylation at Asn-628 is necessary both for surface expression and neutral endopeptidase activity.

Its subcellular location is the cell membrane. The catalysed reaction is Preferential cleavage of polypeptides between hydrophobic residues, particularly with Phe or Tyr at P1'.. It catalyses the reaction substance P + H2O = substance P(1-9) + L-Leu-L-Met-NH2. The enzyme catalyses substance P + H2O = substance P(1-7) + L-Phe-Gly-L-Leu-L-Met-NH2. It carries out the reaction neurotensin + H2O = neurotensin(1-11) + L-isoleucyl-L-leucine. The catalysed reaction is neurotensin + H2O = neurotensin(1-10) + L-tyrosyl-L-isoleucyl-L-leucine. Functionally, thermolysin-like specificity, but is almost confined on acting on polypeptides of up to 30 amino acids. Biologically important in the destruction of opioid peptides such as Met- and Leu-enkephalins by cleavage of a Gly-Phe bond. Catalyzes cleavage of bradykinin, substance P and neurotensin peptides. Able to cleave angiotensin-1, angiotensin-2 and angiotensin 1-9. Involved in the degradation of atrial natriuretic factor (ANF) and brain natriuretic factor (BNP(1-32)). Displays UV-inducible elastase activity toward skin preelastic and elastic fibers. The protein is Neprilysin (MME) of Pongo abelii (Sumatran orangutan).